Reading from the N-terminus, the 497-residue chain is Guanosine-5'-triphosphate,3'-diphosphate pyrophosphatase (497 aa).

The protein belongs to the GppA/Ppx family. GppA subfamily.

The catalysed reaction is guanosine 3'-diphosphate 5'-triphosphate + H2O = guanosine 3',5'-bis(diphosphate) + phosphate + H(+). The protein operates within purine metabolism; ppGpp biosynthesis; ppGpp from GTP: step 2/2. Catalyzes the conversion of pppGpp to ppGpp. Guanosine pentaphosphate (pppGpp) is a cytoplasmic signaling molecule which together with ppGpp controls the 'stringent response', an adaptive process that allows bacteria to respond to amino acid starvation, resulting in the coordinated regulation of numerous cellular activities. The sequence is that of Guanosine-5'-triphosphate,3'-diphosphate pyrophosphatase from Vibrio campbellii (strain ATCC BAA-1116).